Consider the following 658-residue polypeptide: MEGAAVSAAGDGPAVETGLPGSPLEAVAGATAAPVEPRKPHGVKRHHHKHNLKHRYELQETLGKGTYGKVKRATERFSGRVVAIKSIRKDKIKDELDMVHIRREIEIMSSLNHPHIISIYEVFENKDKIVIIMEYASKGELYDYISERRRLSERETRHFFRQIVSAVHYCHKNGVVHRDLKLENILLDDNCNIKIADFGLSNLYQKDKFLQTFCGSPLYASPEIVNGRPYRGPEVDSWALGVLLYTLIYGTMPFDGFDHKNLIRQISSGEYREPTQPSDARGLIRWMLMVNPDRRATIEDIANHWWVNWGYKSSVCDCDALPDSESPLLARIIDWHHRSTGLQAEAEAKMKGLAKPGASEVVLERQRSLKKSKKENDFPQSGQDSVPESPSKLSSKRPKGILKKRSNSEHRSHSTGFIEGIVSPALPSPFKMEQDLCRTAIPLPSSPEADMSGKLSLKQSATMPKKGILKKTQQRESGYYSSPERSESSELLDSNDVVISGGLSSPPPDPARGTSHSLSCRRKGILKHSSRYSDGGTDPALTRPEMPTLESLSPPGVPSDGISRSYSRPSSIISDDSVLSSDSFDLLELQENRPARQRIRSCVSAENFLQLQDFETPHNRPRPQYLKRLADSSFSLLTDMDDVTQVYKKALEICSKLN.

The residue at position 1 (methionine 1) is an N-acetylmethionine. A disordered region spans residues 1–53 (MEGAAVSAAGDGPAVETGLPGSPLEAVAGATAAPVEPRKPHGVKRHHHKHNLK). Serine 22 carries the phosphoserine modification. Over residues 40–53 (PHGVKRHHHKHNLK) the composition is skewed to basic residues. Residues 56-307 (YELQETLGKG…IEDIANHWWV (252 aa)) form the Protein kinase domain. ATP contacts are provided by residues 62 to 70 (LGKGTYGKV) and lysine 85. Aspartate 179 functions as the Proton acceptor in the catalytic mechanism. Threonine 212 bears the Phosphothreonine; by LKB1 mark. Disordered regions lie at residues 353-422 (LAKP…EGIV) and 441-568 (IPLP…SYSR). The segment covering 378–393 (FPQSGQDSVPESPSKL) has biased composition (polar residues). Over residues 394-405 (SSKRPKGILKKR) the composition is skewed to basic residues. A GILK motif motif is present at residues 400–403 (GILK). Residue serine 456 is modified to Phosphoserine. Residues 519–530 (SCRRKGILKHSS) show a composition bias toward basic residues. Positions 559–568 (SDGISRSYSR) are enriched in low complexity. Phosphoserine; by PKB/AKT1 is present on serine 601.

This sequence belongs to the protein kinase superfamily. CAMK Ser/Thr protein kinase family. SNF1 subfamily. Interacts (via GILK motif) with PPP1CB; the interaction is direct and bridges NUAK1 and PPP1R12A. Interacts with CDKN1A. Requires Mg(2+) as cofactor. Phosphorylated at Thr-212 by STK11/LKB1 in complex with STE20-related adapter-alpha (STRADA) pseudo kinase and CAB39. Not dephosphorylated by the myosin PP1 complex when regulating its activity, due to the presence of PPP1R12A, which prevents myosin PP1 from dephosphorylating NUAK1. Phosphorylated by STK38L upon stimulation with IGF1. Post-translationally, ubiquitinated with 'Lys-29'- and 'Lys-33'-linked polyubiquitins which appear to impede LKB1-mediated phosphorylation. Deubiquitinated by USP9X. Expressed in the developing central nervous system, in epidermis, and some other tissues.

The protein resides in the nucleus. Its subcellular location is the cytoplasm. It carries out the reaction L-seryl-[protein] + ATP = O-phospho-L-seryl-[protein] + ADP + H(+). The catalysed reaction is L-threonyl-[protein] + ATP = O-phospho-L-threonyl-[protein] + ADP + H(+). Activated by phosphorylation on Thr-212. Activated by phosphorylation at Ser-601 AKT1 during glucose starvation; the relevance of such activation in normal cells is however unsure. Its function is as follows. Serine/threonine-protein kinase involved in various processes such as cell adhesion, regulation of cell ploidy and senescence, cell proliferation and tumor progression. Phosphorylates ATM, CASP6, LATS1, PPP1R12A and p53/TP53. Acts as a regulator of cellular senescence and cellular ploidy by mediating phosphorylation of 'Ser-464' of LATS1, thereby controlling its stability. Controls cell adhesion by regulating activity of the myosin protein phosphatase 1 (PP1) complex. Acts by mediating phosphorylation of PPP1R12A subunit of myosin PP1: phosphorylated PPP1R12A then interacts with 14-3-3, leading to reduced dephosphorylation of myosin MLC2 by myosin PP1. May be involved in DNA damage response: phosphorylates p53/TP53 at 'Ser-15' and 'Ser-392' and is recruited to the CDKN1A/WAF1 promoter to participate in transcription activation by p53/TP53. May also act as a tumor malignancy-associated factor by promoting tumor invasion and metastasis under regulation and phosphorylation by AKT1. Suppresses Fas-induced apoptosis by mediating phosphorylation of CASP6, thereby suppressing the activation of the caspase and the subsequent cleavage of CFLAR. Regulates UV radiation-induced DNA damage response mediated by CDKN1A. In association with STK11, phosphorylates CDKN1A in response to UV radiation and contributes to its degradation which is necessary for optimal DNA repair. The chain is NUAK family SNF1-like kinase 1 (Nuak1) from Mus musculus (Mouse).